The sequence spans 876 residues: Alanine--tRNA ligase (876 aa).

An N6-acetyllysine modification is found at K74. H564, H568, C666, and H670 together coordinate Zn(2+).

This sequence belongs to the class-II aminoacyl-tRNA synthetase family. Homotetramer. Zn(2+) serves as cofactor.

It is found in the cytoplasm. The enzyme catalyses tRNA(Ala) + L-alanine + ATP = L-alanyl-tRNA(Ala) + AMP + diphosphate. In terms of biological role, catalyzes the attachment of alanine to tRNA(Ala) in a two-step reaction: alanine is first activated by ATP to form Ala-AMP and then transferred to the acceptor end of tRNA(Ala). Also edits incorrectly charged Ser-tRNA(Ala) and Gly-tRNA(Ala) via its editing domain. The protein is Alanine--tRNA ligase of Shigella dysenteriae serotype 1 (strain Sd197).